An 860-amino-acid polypeptide reads, in one-letter code: Probable linoleate 9S-lipoxygenase 4 (860 aa).

Residues 29–159 (NALDFTDLAG…RYKSDRIFFA (131 aa)) enclose the PLAT domain. The 699-residue stretch at 162 to 860 (PYLPSETPEL…GKGIPNSVSI (699 aa)) folds into the Lipoxygenase domain. The interval 209–246 (PDQGKENVRTTLGGSADYPYPRRGRTGRPPTRTDPKSE) is disordered. Fe cation contacts are provided by His521, His526, His712, Asn716, and Ile860.

This sequence belongs to the lipoxygenase family. Monomer. It depends on Fe cation as a cofactor. Expressed in tubers and roots. Not detected in leaves, flowers, stems, shoot tips, or axillary buds.

The protein localises to the cytoplasm. It carries out the reaction (9Z,12Z)-octadecadienoate + O2 = (9S)-hydroperoxy-(10E,12Z)-octadecadienoate. The protein operates within lipid metabolism; oxylipin biosynthesis. Functionally, plant lipoxygenases may be involved in a number of diverse aspects of plant physiology including growth and development, pest resistance, and senescence or responses to wounding. Catalyzes the hydroperoxidation of lipids containing a cis,cis-1,4-pentadiene structure. This chain is Probable linoleate 9S-lipoxygenase 4 (LOX1.4), found in Solanum tuberosum (Potato).